A 368-amino-acid chain; its full sequence is tRNA-specific 2-thiouridylase MnmA (368 aa).

Residues 11-18 (GMSGGVDS) and M37 contribute to the ATP site. Residues 97–99 (NPD) form an interaction with target base in tRNA region. C102 functions as the Nucleophile in the catalytic mechanism. Cysteines 102 and 199 form a disulfide. Position 127 (G127) interacts with ATP. The segment at 149–151 (KDQ) is interaction with tRNA. The Cysteine persulfide intermediate role is filled by C199. Positions 311–312 (RY) are interaction with tRNA.

The protein belongs to the MnmA/TRMU family. As to quaternary structure, interacts with TusE.

The protein localises to the cytoplasm. It catalyses the reaction S-sulfanyl-L-cysteinyl-[protein] + uridine(34) in tRNA + AH2 + ATP = 2-thiouridine(34) in tRNA + L-cysteinyl-[protein] + A + AMP + diphosphate + H(+). Catalyzes the 2-thiolation of uridine at the wobble position (U34) of tRNA(Lys), tRNA(Glu) and tRNA(Gln), leading to the formation of s(2)U34, the first step of tRNA-mnm(5)s(2)U34 synthesis. Sulfur is provided by IscS, via a sulfur-relay system. Binds ATP and its substrate tRNAs. This chain is tRNA-specific 2-thiouridylase MnmA, found in Shigella boydii serotype 4 (strain Sb227).